A 200-amino-acid chain; its full sequence is Lipopolysaccharide core heptose(II)-phosphate phosphatase (200 aa).

A signal peptide spans 1 to 25 (MLAFCRSSLKSKKYFIILLALAAIA).

This sequence belongs to the phosphoglycerate mutase family. Ais subfamily.

It localises to the periplasm. Its pathway is bacterial outer membrane biogenesis; lipopolysaccharide metabolism. In terms of biological role, catalyzes the dephosphorylation of heptose(II) of the outer membrane lipopolysaccharide core. This is Lipopolysaccharide core heptose(II)-phosphate phosphatase from Escherichia coli O6:K15:H31 (strain 536 / UPEC).